The sequence spans 184 residues: Large ribosomal subunit protein uL5 (184 aa).

It belongs to the universal ribosomal protein uL5 family. Part of the 50S ribosomal subunit; part of the 5S rRNA/L5/L18/L25 subcomplex. Contacts the 5S rRNA and the P site tRNA. Forms a bridge to the 30S subunit in the 70S ribosome.

In terms of biological role, this is one of the proteins that bind and probably mediate the attachment of the 5S RNA into the large ribosomal subunit, where it forms part of the central protuberance. In the 70S ribosome it contacts protein S13 of the 30S subunit (bridge B1b), connecting the 2 subunits; this bridge is implicated in subunit movement. Contacts the P site tRNA; the 5S rRNA and some of its associated proteins might help stabilize positioning of ribosome-bound tRNAs. The sequence is that of Large ribosomal subunit protein uL5 from Pelagibacter ubique (strain HTCC1062).